A 595-amino-acid polypeptide reads, in one-letter code: MSNSAIPLNVVAVQEPRLELNNERTWVVVKGGQQVTYYPFPSTSFSSNQFNFICNPPSAQTVLDRLVFIQVPYDITFTANPSHAGITENLLQPGRDAFRAFPISSITNTLNATINGFPVNIELAQIIHALSRYHTPLKVKNGWMSMQPSFEDNYQSYRDADGANNNPLGVFTSAAGLSELPRGSYTMNVVTNTTTTARITGVLYEQVFLPPFLWDGEQAGGLANLTSLTFNWVLNNNLARIWSHSDITNDVSGNSTIGSMNISFQQPSMYLGFVTPRLNIPIPPRITYPYFKLSRYTTQFQNTLAPNASSTFKSNVVQLDSIPRKLYLFVKQSDNVIYQNLNNQITTPDVFLQINNLNLTWNNQQGILSGASSQNLYDFSVQNGYNKTWSEFNGVTQQFNGVSGQPTKVIGLEGGIVCLELGKDVGLRDDEAEGVIGNFNLQVQMTVTNTNQYVTVTPDMYIVAVYDGTLVISNTSAMASIGVASKEEVLNARITHGVSYNELQRIYGGDFFSSFKNFLGKVGNVAGKVNNFLKDSKIASSVLGAIPHPYAQVPGQILKNVGYGESHVGGGKKKGGVLIGGRQLTKAELRKELKM.

The protein resides in the virion. Its function is as follows. May self assemble to form an icosahedral capsid. Most abundant protein in the virion. The chain is Putative capsid protein V20 from Sputnik virophage.